Here is a 1070-residue protein sequence, read N- to C-terminus: DNA-directed RNA polymerase subunit beta (1070 aa).

It belongs to the RNA polymerase beta chain family. In terms of assembly, in plastids the minimal PEP RNA polymerase catalytic core is composed of four subunits: alpha, beta, beta', and beta''. When a (nuclear-encoded) sigma factor is associated with the core the holoenzyme is formed, which can initiate transcription.

The protein resides in the plastid. Its subcellular location is the chloroplast. The catalysed reaction is RNA(n) + a ribonucleoside 5'-triphosphate = RNA(n+1) + diphosphate. DNA-dependent RNA polymerase catalyzes the transcription of DNA into RNA using the four ribonucleoside triphosphates as substrates. This Spinacia oleracea (Spinach) protein is DNA-directed RNA polymerase subunit beta.